Here is a 595-residue protein sequence, read N- to C-terminus: Probable hydrolase M10 (595 aa).

The signal sequence occupies residues 1-23 (MRFTSTILLRVAVLLSLGGGSQT). Asn-59, Asn-87, Asn-266, Asn-436, Asn-457, and Asn-561 each carry an N-linked (GlcNAc...) asparagine glycan.

The protein belongs to the beta-lactamase family.

The protein operates within secondary metabolite biosynthesis. Its function is as follows. Probable hydrolase; part of the gene cluster that mediates the biosynthesis of squalestatin S1 (SQS1, also known as zaragozic acid A), a heavily oxidized fungal polyketide that offers potent cholesterol lowering activity by targeting squalene synthase (SS). SQS1 is composed of a 2,8-dioxobicyclic[3.2.1]octane-3,4,5-tricarboxyclic acid core that is connected to two lipophilic polyketide arms. These initial steps feature the priming of an unusual benzoic acid starter unit onto the highly reducing polyketide synthase pks2, followed by oxaloacetate extension and product release to generate a tricarboxylic acid containing product. The phenylalanine ammonia lyase (PAL) M7 and the acyl-CoA ligase M9 are involved in transforming phenylalanine into benzoyl-CoA. The citrate synthase-like protein R3 is involved in connecting the C-alpha-carbons of the hexaketide chain and oxaloacetate to afford the tricarboxylic acid unit. The potential hydrolytic enzymes, M8 and M10, are in close proximity to pks2 and may participate in product release. On the other side, the tetraketide arm is synthesized by a the squalestatin tetraketide synthase pks1 and enzymatically esterified to the core in the last biosynthetic step, by the acetyltransferase M4. The biosynthesis of the tetraketide must involve 3 rounds of chain extension. After the first and second rounds methyl-transfer occurs, and in all rounds of extension the ketoreductase and dehydratase are active. The enoyl reductase and C-MeT of pks1 are not active in the final round of extension. The acetyltransferase M4 appears to have a broad substrate selectivity for its acyl CoA substrate, allowing the in vitro synthesis of novel squalestatins. The biosynthesis of SQS1 requires several oxidative steps likely performed by oxidoreductases M1, R1 and R2. Finally, in support of the identification of the cluster as being responsible for SQS1 production, the cluster contains a gene encoding a putative squalene synthase (SS) R6, suggesting a likely mechanism for self-resistance. In Phoma sp. (strain ATCC 20986 / MF5453), this protein is Probable hydrolase M10.